Here is a 355-residue protein sequence, read N- to C-terminus: DNA polymerase IV (355 aa).

In terms of domain architecture, UmuC spans 7–188 (IIHIDMDCFY…LPVRKLFGVG (182 aa)). The Mg(2+) site is built by Asp11 and Asp106. Glu107 is a catalytic residue.

It belongs to the DNA polymerase type-Y family. In terms of assembly, monomer. Requires Mg(2+) as cofactor.

The protein resides in the cytoplasm. It carries out the reaction DNA(n) + a 2'-deoxyribonucleoside 5'-triphosphate = DNA(n+1) + diphosphate. Poorly processive, error-prone DNA polymerase involved in untargeted mutagenesis. Copies undamaged DNA at stalled replication forks, which arise in vivo from mismatched or misaligned primer ends. These misaligned primers can be extended by PolIV. Exhibits no 3'-5' exonuclease (proofreading) activity. May be involved in translesional synthesis, in conjunction with the beta clamp from PolIII. The chain is DNA polymerase IV from Legionella pneumophila (strain Corby).